The following is a 330-amino-acid chain: Methionyl-tRNA formyltransferase (330 aa).

116-119 (SLLP) provides a ligand contact to (6S)-5,6,7,8-tetrahydrofolate.

It belongs to the Fmt family.

The catalysed reaction is L-methionyl-tRNA(fMet) + (6R)-10-formyltetrahydrofolate = N-formyl-L-methionyl-tRNA(fMet) + (6S)-5,6,7,8-tetrahydrofolate + H(+). Attaches a formyl group to the free amino group of methionyl-tRNA(fMet). The formyl group appears to play a dual role in the initiator identity of N-formylmethionyl-tRNA by promoting its recognition by IF2 and preventing the misappropriation of this tRNA by the elongation apparatus. This chain is Methionyl-tRNA formyltransferase, found in Nitratidesulfovibrio vulgaris (strain DP4) (Desulfovibrio vulgaris).